A 149-amino-acid chain; its full sequence is Large ribosomal subunit protein uL22c (149 aa).

It belongs to the universal ribosomal protein uL22 family. In terms of assembly, part of the 50S ribosomal subunit.

It localises to the plastid. The protein localises to the chloroplast. Its function is as follows. This protein binds specifically to 23S rRNA. In terms of biological role, the globular domain of the protein is located near the polypeptide exit tunnel on the outside of the subunit, while an extended beta-hairpin is found that lines the wall of the exit tunnel in the center of the 70S ribosome. The sequence is that of Large ribosomal subunit protein uL22c (rpl22) from Hordeum vulgare (Barley).